Here is a 1809-residue protein sequence, read N- to C-terminus: Proprotein convertase subtilisin/kexin type 5 (1809 aa).

A signal peptide spans 1-34 (MDWGWGSRCCRPGRRDLLCVLALLAGCLLPVCRT). Positions 35–116 (RVYTNHWAVK…QQVVKKRTKR (82 aa)) are excised as a propeptide. Topologically, residues 117-1700 (DYDLSRAQST…DTVFHEHTKT (1584 aa)) are extracellular. In terms of domain architecture, Peptidase S8 spans 136–455 (MWYMHCSDNT…FGLMDAEAMV (320 aa)). Catalysis depends on charge relay system residues Asp-173 and His-214. N-linked (GlcNAc...) asparagine glycans are attached at residues Asn-227 and Asn-383. Ser-388 serves as the catalytic Charge relay system. The region spanning 463-603 (TVPQQHVCVE…SLVLYGTSVQ (141 aa)) is the P/Homo B domain. The short motif at 521 to 523 (RGD) is the Cell attachment site element. FU repeat units follow at residues 632 to 682 (EDYA…GHFH), 685 to 732 (KKRC…GSYQ), 736 to 779 (KNIC…GQFF), 781 to 826 (GHDC…SYYL), 834 to 881 (YKSC…GEYI), 884 to 929 (QGHC…WKFE), 931 to 964 (KKQC…QDSE), 965 to 1010 (YGEC…KTFG), 1012 to 1054 (KWEC…GFYG), 1058 to 1099 (LGEC…PTWP), 1137 to 1179 (TRQY…GTWL), 1183 to 1230 (SSSC…GFYA), 1232 to 1276 (DGVC…KHVA), 1278 to 1321 (EGVC…NFYP), 1323 to 1369 (MRQC…GTYK), 1373 to 1418 (NDEC…IEYW), 1422 to 1467 (SHRC…GYHT), 1471 to 1516 (SHQC…GYYG), 1520 to 1567 (SGRC…HYYA), 1571 to 1616 (AQTC…GEYR), and 1622 to 1669 (NFNC…SHPH). A CRM (Cys-rich motif) region spans residues 638-1685 (CDPECSEVGC…DCQSSTDECI (1048 aa)). A glycan (N-linked (GlcNAc...) asparagine) is linked at Asn-667. Residues Asn-754, Asn-804, and Asn-854 are each glycosylated (N-linked (GlcNAc...) asparagine). 2 N-linked (GlcNAc...) asparagine glycosylation sites follow: Asn-1642 and Asn-1664. Residues 1701–1721 (ALLVTSGAMLLLLLGAAVVVW) form a helical membrane-spanning segment. The Cytoplasmic segment spans residues 1722-1809 (RKSRSQPVAK…EYDDESYSYQ (88 aa)). AC regions lie at residues 1757–1776 (VIEY…IVYM) and 1788–1809 (YGLL…YSYQ).

The protein belongs to the peptidase S8 family. As to expression, expressed in the intestine, brain, adrenal gland, anterior pituitary, thyroid, ovaries, testis and lung. Highest levels are found in the gut, duodenum, jejunum and ileum. Expression is higher in female than in male reproductive organs.

The protein localises to the secreted. Its subcellular location is the endomembrane system. In terms of biological role, serine endoprotease that processes various proproteins by cleavage at paired basic amino acids, recognizing the RXXX[KR]R consensus motif. Likely functions in the constitutive and regulated secretory pathways. Plays an essential role in pregnancy establishment by proteolytic activation of a number of important factors such as BMP2, CALD1 and alpha-integrins. May be responsible for the maturation of gastrointestinal peptides. May be involved in the cellular proliferation of adrenal cortex via the activation of growth factors. This Rattus norvegicus (Rat) protein is Proprotein convertase subtilisin/kexin type 5 (Pcsk5).